The primary structure comprises 168 residues: 6,7-dimethyl-8-ribityllumazine synthase (168 aa).

5-amino-6-(D-ribitylamino)uracil-binding positions include phenylalanine 24, 58 to 60 (ALE), and 82 to 84 (AVI). 87–88 (ET) serves as a coordination point for (2S)-2-hydroxy-3-oxobutyl phosphate. The active-site Proton donor is the histidine 90. Asparagine 115 contacts 5-amino-6-(D-ribitylamino)uracil. Arginine 129 is a (2S)-2-hydroxy-3-oxobutyl phosphate binding site.

The protein belongs to the DMRL synthase family.

It carries out the reaction (2S)-2-hydroxy-3-oxobutyl phosphate + 5-amino-6-(D-ribitylamino)uracil = 6,7-dimethyl-8-(1-D-ribityl)lumazine + phosphate + 2 H2O + H(+). The protein operates within cofactor biosynthesis; riboflavin biosynthesis; riboflavin from 2-hydroxy-3-oxobutyl phosphate and 5-amino-6-(D-ribitylamino)uracil: step 1/2. Its function is as follows. Catalyzes the formation of 6,7-dimethyl-8-ribityllumazine by condensation of 5-amino-6-(D-ribitylamino)uracil with 3,4-dihydroxy-2-butanone 4-phosphate. This is the penultimate step in the biosynthesis of riboflavin. The protein is 6,7-dimethyl-8-ribityllumazine synthase of Paraburkholderia phytofirmans (strain DSM 17436 / LMG 22146 / PsJN) (Burkholderia phytofirmans).